Here is a 3081-residue protein sequence, read N- to C-terminus: MASEVIALCHSFEQELAKSLNVLPPVSASKPDAHDAHLNHHRLSQRIAESVSYYAGRLPAYASVPRILVFGDKLFRAEQYQLALQACYKHIRGLELHSSRENLPRMDAQARLSSHVQACFGCAACEAALLLASDGSVKHPDTLQWLVSCLAQLRAAMSLALPDERLYWLVLNGTVHVYGIAKAMITAGFAEQALPALVFCIKALEGHVAFAAPKYLPWRTQLYTWAVYGLADCGAVEQARALLADGLKRLEMLVALQKLDPVPAAPAVQAAFAAARGALVGLQLRVEMAAGAAVTPVLAQLSAGAAGAGAVGAAGPTARAGLAALVEALHVPHRRVVRTEAVSGGPLKELFDAAMAVAAPLIGDLKKATEAAAAADAAAAAAAVAADAASAEAETAGGADAAAPADTGAQQQASAAAAAADEAAVAASAALGAAQEALPCALHKGLLCAAYNLEQWKQFEELASLATSRSDVVYADAVPTGTGSTTTTAAAAADVDQTAAQLGTAASILTALRQLSTAPGVESLRTLAAMLQQALSRGITVSGTAGAAPPPPPRRVSMTGMLAGGSASPPNGSSGAGGAAATLTATAAGITQTAGSPSHNGGAAGATASAGGGAAGAPPRPQQSSLAPWQQLRDLIADASLALYGSARPLIDGVFCADDKEAGLVAELLAACHSAWAAVELDDGELRVAAALKLALLLEEEGRLLAAREVLMQAKSVVEQSRVELMVANRRAPDEHLRWVTASRSQPSDDTAALVQGMTASEQELACLQVDVLALLARVELGLGVSEQQGRATARRTAVMEEQAKRTAQSSIFGQRNAAELARDEARLVAAGATPPNPQMKERELLTACAKNPYERAVVLMQMTSFQGADAGRKTQLLQEAGDLLVKAQAAEDGLFAAQQPDLRARRDVPPQPKLLQRSPTSVTLVAHPPGPGLKQPPGARKPPSRYVAYCKSFGAGVGLSINKTATEYPGSGVSVPLGQPVTIQVALPCTLPQLRAPFLEEQVARLKSARLLVLGMEVAALLPDEPLMQEGALRTYGLLAPLLALRAPRSHLLHKALAACHAVLASLTNLVQDSLYRQEHQRSLAARVAAAVTYQLLRLSDEAGEVGAAAHFGRLQLELLKAYDPRFALAGRPALLPGAELQEEASQLHDVLLQHPKLSEWAPEPLVERQKDASDLVARVLPVLGTPAPMDTWSQALGFETAAEHPRWVELVVRMVEAAVRKGNPGNATVVAEQLTWWVRARLRRPPPPPLDAYEAEAAEAAAAGGTAPPWPAKWKLEEAAAALDAATVAASFEPPPVPSTEGMSPEEASAALARHAAVAAAAEATARQRLAAVLLLQKRMPALLARKRLIEKMRENRKRWSPWMARLNLVLGLQAAADARRYAANAPARARAAAAAAEAAAAAADAPGPETSGVAGSRPGTAAVNMPPPVPDPSAAGPPPLTPPEGITPPLQAMMHFARAAHLAARGGAWVEVGNAARHAWNLARATLSADPALTAPLPPVRWERGDAPQPAVAPESILVPAGAGDAGGKKGSKKGGKDDKKKDDKAPAKTPSSPKGGARSSARSKKGFPVEEAPPPPRTYPVVVGARPNMQRAARSLADAVLELVSALRDGLQVYTWVAPVNPRHRFDGPPPRRAALAASASTAGAGLGEEERPVTARVTDSEFSYGSDLQADIWFKEGPLDLAWVSRFLGLAAVVLSRGERWHALVEAGRQWARLSEGAFNERIMPWLLQAAPKAGVDPAPFQSAMDALIRDKNQALDQLDKVRTLVRERLGDTPLMAQSMGHKVRKRKTRAAILAAGPGSGAGGGGGSGLPDSDRASLVSAAYTYRTASTYKTKASQPDFLRIPGEYEKVIEVLKRRNEKGAMLLALHELGDVHAHFGNWGGAATSWNDTLDTLLGPYQALRNWRGRLDGMSPAGTLQAYGLHGLLLGCVLAGKLARYVHHDHLHLRLEAHRLTARLAFCAFSAHLGHPQRRAGFATYTPRELWAAGTDAWLVWSDPYRCPVVDLAGALEGAAAALLDAGLALEALPVLALWEHVTRHVLRNLHGTVLCRLLRVRALVALGLLAEAVEVTGGLMGAAALPDPTLDSDYVLKDTSGAVVEPVPAPPYDNSKLPGEPGNKAALTHIADTPLAPAVEKLYGSWLVAHLALARAQVLMLAGSVPNQWRGVDWRTGERTAAPKPASPAKGAAKGAAAAAPEPPGAGLPEPVEPVMLERAHVLLRKALAMASGEDQPPSEEPSSAGKPAAAGKPAPARAPSPGRAKSPTGKGKGKGGAGDGAGSAAAAPPEVPGPPPPPPPSASQRAEVNVRALLLMSELEQLRWMPSRGLAHALEAARFLGEHADHVNTPQQTDNDELERYTLAPALWFLARGAAVRCAAALGHAAHVHELVAAATSAHAPSEPGSAKVPSGLPELLHCTGMAHVAALTLAAEGRTSDALAALAAVAARYRSLCVYDGRLAAVLLDAAALRDRLGLREDAAELTAQGLAVAEGYCLELGLGEALEAPELTNVYLDGTALYAHALGAAAVHASRRQQHAEAERCAARAVLLLRSHTRALPATHAAALLLLGRTCRMVALCGDGVPVDGQPTLASGAPPASTATLTSAGAGAPGDPAATAVAAGTARAAAGGFNASAGALARTATAGRGGGSAGSSGGGVAATAAKLSAARSALCASITLAAVDGGHLRSLMRGALLELGSIFIAGLDARSAAACLRAGHAAAAKADLVALSSHTLAPVAAAQLPDWALAHVRGQEALFGKKSSNGAISGAAGAAGSARPVATSSSGARPPGTPPGGKPGAGGGSGDGLSDADAARMVFCLLGGLLKGLEALPVGGGARARGEAQVAALHAALRAACAKYGTDACFAEPPLPPSPPDAVPPPPEGSVIVQWHCQDGCWQEARSWRAEGSSGAPDGPLSDSALLALQPVPAYASLLFVVAAPSHDGSPGPHCGEVTFAVKDVRELQRRAKALRARVEAPKAATDILGYAAPSQVELGELLRAAERLLSAVPRNSEDGSSSAGFSAADSGLGGFGSSELMEGEVRPELDVAFLCKLEALLALEAGLDVNDKTLGSWLVQTLPVMM.

9 disordered regions span residues 542-579, 591-626, 910-942, 1406-1451, 1518-1586, 1636-1657, 2176-2210, 2229-2306, and 2776-2806; these read SGTA…AGGA, TQTA…QSSL, PPQP…GARK, ADAP…GITP, ESIL…YPVV, RRAA…EERP, GERT…LPEP, MASG…SQRA, and ARPV…SGDG. Over residues 564-579 the composition is skewed to low complexity; sequence GGSASPPNGSSGAGGA. Residues 1428 to 1449 are compositionally biased toward pro residues; that stretch reads MPPPVPDPSAAGPPPLTPPEGI. Residues 1538–1550 show a composition bias toward basic and acidic residues; sequence GGKDDKKKDDKAP. 3 stretches are compositionally biased toward low complexity: residues 1638–1648, 2181–2199, and 2240–2269; these read AALAASASTAG, APKP…AAAA, and EPSS…SPTG. Pro residues predominate over residues 2289–2301; it reads PEVPGPPPPPPPS. The segment covering 2776–2788 has biased composition (low complexity); the sequence is ARPVATSSSGARP. Positions 2796–2805 are enriched in gly residues; it reads KPGAGGGSGD.

Belongs to the CFAP54 family. In terms of assembly, part of the PDCP1 complex composed of CFAP46, CFAP54, CFAP74 and CFAP221; the PDCP1 complex binds calmodulin.

The protein localises to the cytoplasm. The protein resides in the cytoskeleton. It is found in the cilium axoneme. The polypeptide is Cilia- and flagella-associated protein 54 (Chlamydomonas reinhardtii (Chlamydomonas smithii)).